We begin with the raw amino-acid sequence, 521 residues long: MMLMMLPFIGSVSVSESLVAMTTMCLVYLILKFFQTEIPEGLRRLPGPKPLPIIGNVLGLGSKPYLSLTAMSKRYGHVFQIQIGMRPVVVLSGTGTVRQALIKQGDEFAGRPDLYSFRFINAGKSLAFSTDQAGVWRARRKLAYSALRSFSTLEGTTPEYSCVLEEHICKEGEYLIKQLNTVMKADGSFDPFRHIVVSVANVICGMCFGRRYDHDDQELVSLVTLSDEFGRVVGSGNPADFIPILQYLPSAEMKNFLRINEHFTEFVQKIVTEHYTTFNKDNIRDITDSLIDHCEDRKLDENSNVQMSDEKIVGIVNDLFGAGFDTVSTALSWSVMYLVAHPEIQERLYQEIEDKVGLDRMPLLSDKPNLPFLEAFILEILRHSSFLPFTIPHCTTKDTSLNGYFIPKDTCVFINQWQINHDPELWKDPSSFNPDRFLSADGSEVNKLDGEKVMAFGMGKRRCIGEVIARNEVYLFLAIIIQKLHFLPIPGEKLDMTPEYGLTMKHKRCHLKATMRARNEH.

F229 is a binding site for substrate. A heme-binding site is contributed by C463.

The protein belongs to the cytochrome P450 family. Heme is required as a cofactor.

It is found in the endoplasmic reticulum membrane. The protein resides in the microsome membrane. It catalyses the reaction an organic molecule + reduced [NADPH--hemoprotein reductase] + O2 = an alcohol + oxidized [NADPH--hemoprotein reductase] + H2O + H(+). Cytochromes P450 are a group of heme-thiolate monooxygenases. They oxidize a variety of structurally unrelated compounds, including steroids, fatty acids, and xenobiotics. The chain is Cytochrome P450 1A1 (cyp1a1) from Pleuronectes platessa (European plaice).